A 477-amino-acid polypeptide reads, in one-letter code: Bifunctional protein HldE (477 aa).

Residues 1-318 (MKVTLPEFER…ENAVRGRADT (318 aa)) are ribokinase. Lysine 179 bears the N6-acetyllysine mark. 195-198 (NLSE) serves as a coordination point for ATP. Residue aspartate 264 is part of the active site. The interval 344–477 (MTNGVFDILH…IKKIQQDKKG (134 aa)) is cytidylyltransferase.

It in the N-terminal section; belongs to the carbohydrate kinase PfkB family. The protein in the C-terminal section; belongs to the cytidylyltransferase family. In terms of assembly, homodimer.

The enzyme catalyses D-glycero-beta-D-manno-heptose 7-phosphate + ATP = D-glycero-beta-D-manno-heptose 1,7-bisphosphate + ADP + H(+). It carries out the reaction D-glycero-beta-D-manno-heptose 1-phosphate + ATP + H(+) = ADP-D-glycero-beta-D-manno-heptose + diphosphate. It participates in nucleotide-sugar biosynthesis; ADP-L-glycero-beta-D-manno-heptose biosynthesis; ADP-L-glycero-beta-D-manno-heptose from D-glycero-beta-D-manno-heptose 7-phosphate: step 1/4. It functions in the pathway nucleotide-sugar biosynthesis; ADP-L-glycero-beta-D-manno-heptose biosynthesis; ADP-L-glycero-beta-D-manno-heptose from D-glycero-beta-D-manno-heptose 7-phosphate: step 3/4. The protein operates within bacterial outer membrane biogenesis; LPS core biosynthesis. In terms of biological role, catalyzes the phosphorylation of D-glycero-D-manno-heptose 7-phosphate at the C-1 position to selectively form D-glycero-beta-D-manno-heptose-1,7-bisphosphate. Catalyzes the ADP transfer from ATP to D-glycero-beta-D-manno-heptose 1-phosphate, yielding ADP-D-glycero-beta-D-manno-heptose. In Shigella flexneri, this protein is Bifunctional protein HldE.